The following is a 551-amino-acid chain: Seed biotin-containing protein SBP65 (551 aa).

A compositionally biased stretch (basic and acidic residues) spans 1-20 (MASEQLSRRENITTERKIQN). Positions 1–29 (MASEQLSRRENITTERKIQNAEDSVPQRT) are disordered. Lysine 103 bears the N6-biotinyllysine; atypical mark. Positions 141-211 (KGQVVEERER…RNTTQAAQEK (71 aa)) form a coiled coil. Disordered stretches follow at residues 197 to 265 (TNET…YEAT) and 518 to 551 (DEVEKSMQKNIGSDSHSLDRAKHEGYRAPKNNVS). Low complexity predominate over residues 206 to 219 (QAAQEKGEAAQAKD). Composition is skewed to polar residues over residues 223 to 242 (EKTQQGYEMTGDTVSNSART) and 250 to 265 (AKNTTLGKTQQGYEAT). Residues 533–544 (HSLDRAKHEGYR) are compositionally biased toward basic and acidic residues.

This sequence belongs to the seed biotin-containing protein SBP65 family. As to expression, expressed in dry mature seeds.

In terms of biological role, may serve as a biotin source for several growth-limiting enzymes that are necessary during seed development and the subsequent germination stages, and thus may play some roles in determining seed germination capacity. The sequence is that of Seed biotin-containing protein SBP65 (SBP65) from Pisum sativum (Garden pea).